The chain runs to 219 residues: Probable GTP-binding protein EngB (219 aa).

Residues 31–205 form the EngB-type G domain; the sequence is VGVEIAFAGR…LSILNEWCHP (175 aa). Residues 39–46, 66–70, 84–87, 151–154, and 184–186 contribute to the GTP site; these read GRSNAGKS, GRTQL, DLPG, TKSD, and FSA. Ser46 and Thr68 together coordinate Mg(2+).

It belongs to the TRAFAC class TrmE-Era-EngA-EngB-Septin-like GTPase superfamily. EngB GTPase family. Requires Mg(2+) as cofactor.

Its function is as follows. Necessary for normal cell division and for the maintenance of normal septation. The protein is Probable GTP-binding protein EngB of Shewanella putrefaciens (strain CN-32 / ATCC BAA-453).